The sequence spans 99 residues: Ubiquitin-related modifier 1 (99 aa).

Residue G99 is modified to 1-thioglycine. G99 participates in a covalent cross-link: Glycyl lysine isopeptide (Gly-Lys) (interchain with K-? in acceptor proteins).

It belongs to the URM1 family. In terms of processing, C-terminal thiocarboxylation occurs in 2 steps, it is first acyl-adenylated (-COAMP) via the hesA/moeB/thiF part of UBA4, then thiocarboxylated (-COSH) via the rhodanese domain of UBA4.

The protein resides in the cytoplasm. It functions in the pathway tRNA modification; 5-methoxycarbonylmethyl-2-thiouridine-tRNA biosynthesis. Its function is as follows. Acts as a sulfur carrier required for 2-thiolation of mcm(5)S(2)U at tRNA wobble positions of cytosolic tRNA(Lys), tRNA(Glu) and tRNA(Gln). Serves as sulfur donor in tRNA 2-thiolation reaction by being thiocarboxylated (-COSH) at its C-terminus by the MOCS3 homolog UBA4. The sulfur is then transferred to tRNA to form 2-thiolation of mcm(5)S(2)U. Prior mcm(5) tRNA modification by the elongator complex is required for 2-thiolation. Also acts as a ubiquitin-like protein (UBL) that is covalently conjugated via an isopeptide bond to lysine residues of target proteins such as AHP1. The thiocarboxylated form serves as substrate for conjugation and oxidative stress specifically induces the formation of UBL-protein conjugates. This chain is Ubiquitin-related modifier 1, found in Yarrowia lipolytica (strain CLIB 122 / E 150) (Yeast).